Reading from the N-terminus, the 352-residue chain is Phosphate acyltransferase (352 aa).

The span at 328–339 (ESFPGDAREREG) shows a compositional bias: basic and acidic residues. A disordered region spans residues 328 to 352 (ESFPGDAREREGAPAPDAGTERVAS).

It belongs to the PlsX family. Homodimer. Probably interacts with PlsY.

It is found in the cytoplasm. The catalysed reaction is a fatty acyl-[ACP] + phosphate = an acyl phosphate + holo-[ACP]. It functions in the pathway lipid metabolism; phospholipid metabolism. Catalyzes the reversible formation of acyl-phosphate (acyl-PO(4)) from acyl-[acyl-carrier-protein] (acyl-ACP). This enzyme utilizes acyl-ACP as fatty acyl donor, but not acyl-CoA. The sequence is that of Phosphate acyltransferase from Citrifermentans bemidjiense (strain ATCC BAA-1014 / DSM 16622 / JCM 12645 / Bem) (Geobacter bemidjiensis).